A 113-amino-acid chain; its full sequence is Large ribosomal subunit protein bL19 (113 aa).

Belongs to the bacterial ribosomal protein bL19 family.

This protein is located at the 30S-50S ribosomal subunit interface and may play a role in the structure and function of the aminoacyl-tRNA binding site. In Mycobacterium marinum (strain ATCC BAA-535 / M), this protein is Large ribosomal subunit protein bL19.